A 167-amino-acid polypeptide reads, in one-letter code: Photosystem II extrinsic protein V (167 aa).

An N-terminal signal peptide occupies residues methionine 1–alanine 30. Residues cysteine 67, cysteine 70, histidine 71, and histidine 122 each coordinate heme c.

This sequence belongs to the cytochrome c family. PsbV subfamily. PSII is composed of 1 copy each of membrane proteins PsbA, PsbB, PsbC, PsbD, PsbE, PsbF, PsbH, PsbI, PsbJ, PsbK, PsbL, PsbM, PsbT, PsbX, PsbY, PsbZ, Psb30/Ycf12, peripheral proteins PsbO, CyanoQ (PsbQ), PsbU, PsbV and a large number of cofactors. It forms dimeric complexes. Requires heme c as cofactor.

It localises to the cellular thylakoid membrane. One of the extrinsic, lumenal subunits of photosystem II (PSII). PSII is a light-driven water plastoquinone oxidoreductase, using light energy to abstract electrons from H(2)O, generating a proton gradient subsequently used for ATP formation. The extrinsic proteins stabilize the structure of photosystem II oxygen-evolving complex (OEC), the ion environment of oxygen evolution and protect the OEC against heat-induced inactivation. Low-potential cytochrome c that plays a role in the OEC of PSII. The polypeptide is Photosystem II extrinsic protein V (Synechococcus elongatus (strain ATCC 33912 / PCC 7942 / FACHB-805) (Anacystis nidulans R2)).